Reading from the N-terminus, the 229-residue chain is MKTPLKPKFQPAKIANAVVVGGMIAFGKTTIAESLAKHLKGSKVIYELEEQDQLADLLLAKMYERNDELLYAPLFQLYFTLNRFNKYRKECNNKTPTIFDRSIFEDWLFAKQNIHRPSIFTYYNHLWNGIVKELIFKHGIPALYVILEGDWELFEQRLFQRNRKVEIDNFAKNKDYFKNLYKIYGEFIKNVCYDFGISHCIVNANQSVESITKQVLEVLKSKNLDWEII.

22–29 (GMIAFGKT) provides a ligand contact to ATP.

This is an uncharacterized protein from Mycoplasma pneumoniae (strain ATCC 29342 / M129 / Subtype 1) (Mycoplasmoides pneumoniae).